Consider the following 197-residue polypeptide: Ribonuclease HII (197 aa).

Residues 11-197 enclose the RNase H type-2 domain; sequence NLIAGVDEVG…FAPVRKILGL (187 aa). Positions 17, 18, and 109 each coordinate a divalent metal cation.

Belongs to the RNase HII family. Mn(2+) is required as a cofactor. It depends on Mg(2+) as a cofactor.

It is found in the cytoplasm. The enzyme catalyses Endonucleolytic cleavage to 5'-phosphomonoester.. In terms of biological role, endonuclease that specifically degrades the RNA of RNA-DNA hybrids. This Haemophilus ducreyi (strain 35000HP / ATCC 700724) protein is Ribonuclease HII.